Reading from the N-terminus, the 659-residue chain is Threonine--tRNA ligase (659 aa).

The TGS domain occupies 7–70 (DSELIKLTLP…QQDGAIEIVT (64 aa)). The interval 253–555 (DHRKLGSELE…LIENFAGNFP (303 aa)) is catalytic. Positions 351, 402, and 532 each coordinate Zn(2+).

This sequence belongs to the class-II aminoacyl-tRNA synthetase family. Homodimer. The cofactor is Zn(2+).

It is found in the cytoplasm. The catalysed reaction is tRNA(Thr) + L-threonine + ATP = L-threonyl-tRNA(Thr) + AMP + diphosphate + H(+). Its function is as follows. Catalyzes the attachment of threonine to tRNA(Thr) in a two-step reaction: L-threonine is first activated by ATP to form Thr-AMP and then transferred to the acceptor end of tRNA(Thr). Also edits incorrectly charged L-seryl-tRNA(Thr). The chain is Threonine--tRNA ligase from Chloroherpeton thalassium (strain ATCC 35110 / GB-78).